Consider the following 219-residue polypeptide: Ribose-5-phosphate isomerase A (219 aa).

Residues 28–31, 81–84, and 94–97 each bind substrate; these read SGST, DGAD, and KGGG. Residue E103 is the Proton acceptor of the active site. Position 121 (K121) interacts with substrate.

It belongs to the ribose 5-phosphate isomerase family. In terms of assembly, homodimer.

It catalyses the reaction aldehydo-D-ribose 5-phosphate = D-ribulose 5-phosphate. It functions in the pathway carbohydrate degradation; pentose phosphate pathway; D-ribose 5-phosphate from D-ribulose 5-phosphate (non-oxidative stage): step 1/1. Catalyzes the reversible conversion of ribose-5-phosphate to ribulose 5-phosphate. The chain is Ribose-5-phosphate isomerase A from Actinobacillus pleuropneumoniae serotype 5b (strain L20).